The chain runs to 257 residues: MLILISPAKTLDYQSPLATTRYTQPELLDHSQQLIQQARQLSAPQISRLMGISDKLADLNATRFHDWQPHFTPDNARQAILAFKGDVYTGLQAETFNDADFDFAQQHLRMLSGLYGVLRPLDLMQPYRLEMGIRLENPRGKDLYQFWGDIITDKLNEALEAQGDRVVVNLASEEYFKSVKPKKLNAELIKPVFLDEKNGKFKVVSFYAKKARGLMSRFIIENRLTKPEQLTAFDREGYFFDEETSTKDELVFKRYEQ.

It belongs to the UPF0246 family.

The polypeptide is UPF0246 protein YaaA (Salmonella schwarzengrund (strain CVM19633)).